Here is a 559-residue protein sequence, read N- to C-terminus: MENIKVAKVGNVKFVNKGNELNGTLHLTAYHSIFSISENGKEIWTAYSMINNVKLCSNEKSFCIRIQCRDFMFFCWRFQSTEDAMDVYDTLQELMSINSINMLYAFYYMPSGDEEKLPSSWKSFLLENEYRRMGVGDSTQADGAGGNWRITKINENYSECHSYPQALAVPASISDSVIYYGCKYRSKNRFPTLTYLHKNSFSITRASQPLVGIRQNRSAQDEKLVEAIFATSIIPGKENLIVDARPSTNAMANIAVGAGSENMDHYRFAKKIYLGIDNIHVMRDSLNKIVNALKNTDISAAPPLIELLNRSSWLKHLANILQGAVLIVKTVHFRHAHVLVHCSDGWDRTSQLCALPQLCLDPYYRTIEGFFALVEKDWLSFGHRFAERCCHLPGKRIFTIDSSYSEEPPQSSPSSTLQYTFSTVRSALSGFSIDHSEKMMSPVFHQFLDCVWQIMDQFPNCFEFNERFLRRLLYHLYSCQYGSFLYNSERERAQASVSTHTRCIWDYFLSRKDEFKNPNYVPYDDVIMPDPSSLRWWSASFAQPDENMNIPSPSESPSL.

Residues 120–541 enclose the Myotubularin phosphatase domain; the sequence is SWKSFLLENE…SSLRWWSASF (422 aa). C342 (phosphocysteine intermediate) is an active-site residue.

Belongs to the protein-tyrosine phosphatase family. Non-receptor class myotubularin subfamily.

It localises to the cytoplasm. It catalyses the reaction a 1,2-diacyl-sn-glycero-3-phospho-(1D-myo-inositol-3-phosphate) + H2O = a 1,2-diacyl-sn-glycero-3-phospho-(1D-myo-inositol) + phosphate. In terms of biological role, lipid phosphatase which dephosphorylates phosphatidylinositol 3-monophosphate (PI3P). Involved in the control of PI3P-dependent signaling and in the maintenance of endosomal system integrity. In Schizosaccharomyces pombe (strain 972 / ATCC 24843) (Fission yeast), this protein is Phosphoinositide 3-phosphatase.